The chain runs to 496 residues: Membrane-bound lytic murein transglycosylase F (496 aa).

The signal sequence occupies residues 1-31 (MPIFSTRVLTYLRCIFRLFIGLTLLLTLVGC). The interval 32–271 (DFYTPSSQLE…KLDEKYFGHV (240 aa)) is non-LT domain. The segment at 273-496 (NFDFVDTRTF…AEVVKQITLR (224 aa)) is LT domain. E316 is a catalytic residue. The segment at 464 to 486 (HRREELDDDDSSEPPSAERPTVI) is disordered.

This sequence in the N-terminal section; belongs to the bacterial solute-binding protein 3 family. It in the C-terminal section; belongs to the transglycosylase Slt family.

The protein localises to the cell outer membrane. It catalyses the reaction Exolytic cleavage of the (1-&gt;4)-beta-glycosidic linkage between N-acetylmuramic acid (MurNAc) and N-acetylglucosamine (GlcNAc) residues in peptidoglycan, from either the reducing or the non-reducing ends of the peptidoglycan chains, with concomitant formation of a 1,6-anhydrobond in the MurNAc residue.. In terms of biological role, murein-degrading enzyme that degrades murein glycan strands and insoluble, high-molecular weight murein sacculi, with the concomitant formation of a 1,6-anhydromuramoyl product. Lytic transglycosylases (LTs) play an integral role in the metabolism of the peptidoglycan (PG) sacculus. Their lytic action creates space within the PG sacculus to allow for its expansion as well as for the insertion of various structures such as secretion systems and flagella. This chain is Membrane-bound lytic murein transglycosylase F, found in Aeromonas hydrophila subsp. hydrophila (strain ATCC 7966 / DSM 30187 / BCRC 13018 / CCUG 14551 / JCM 1027 / KCTC 2358 / NCIMB 9240 / NCTC 8049).